Reading from the N-terminus, the 868-residue chain is Leucine--tRNA ligase (868 aa).

The 'HIGH' region motif lies at 42–52 (PYPSGKLHMGH). The 'KMSKS' region motif lies at 627 to 631 (KMSKS). K630 serves as a coordination point for ATP.

This sequence belongs to the class-I aminoacyl-tRNA synthetase family.

The protein localises to the cytoplasm. The catalysed reaction is tRNA(Leu) + L-leucine + ATP = L-leucyl-tRNA(Leu) + AMP + diphosphate. The chain is Leucine--tRNA ligase from Pseudomonas syringae pv. tomato (strain ATCC BAA-871 / DC3000).